The following is a 200-amino-acid chain: GTP cyclohydrolase-2 (200 aa).

50–54 is a binding site for GTP; the sequence is RVHSE. Zn(2+) contacts are provided by C55, C66, and C68. Residues Q71, 93–95, and T115 contribute to the GTP site; that span reads EGR. D127 functions as the Proton acceptor in the catalytic mechanism. Catalysis depends on R129, which acts as the Nucleophile. The GTP site is built by T150 and K155.

This sequence belongs to the GTP cyclohydrolase II family. Requires Zn(2+) as cofactor.

It carries out the reaction GTP + 4 H2O = 2,5-diamino-6-hydroxy-4-(5-phosphoribosylamino)-pyrimidine + formate + 2 phosphate + 3 H(+). It participates in cofactor biosynthesis; riboflavin biosynthesis; 5-amino-6-(D-ribitylamino)uracil from GTP: step 1/4. Catalyzes the conversion of GTP to 2,5-diamino-6-ribosylamino-4(3H)-pyrimidinone 5'-phosphate (DARP), formate and pyrophosphate. The protein is GTP cyclohydrolase-2 of Acinetobacter baumannii (strain SDF).